The sequence spans 392 residues: ESX-1 secretion-associated protein EspA (392 aa).

The interval 302–392 is disordered; it reads TRQALRPRAD…GQKVLVRNVV (91 aa). A compositionally biased stretch (gly residues) spans 334–344; sequence QGMGGPVGMGG.

As to quaternary structure, homodimer; disulfide-linked.

It localises to the secreted. Functionally, required for secretion of EsxA (ESAT-6) and EsxB (CFP-10) and for virulence. The sequence is that of ESX-1 secretion-associated protein EspA from Mycobacterium tuberculosis (strain CDC 1551 / Oshkosh).